Consider the following 436-residue polypeptide: Enolase (436 aa).

Gln-163 contributes to the (2R)-2-phosphoglycerate binding site. The active-site Proton donor is Glu-205. Mg(2+) contacts are provided by Asp-242, Glu-285, and Asp-312. (2R)-2-phosphoglycerate contacts are provided by Lys-337, Arg-366, Ser-367, and Lys-388. Residue Lys-337 is the Proton acceptor of the active site.

Belongs to the enolase family. Mg(2+) is required as a cofactor.

It is found in the cytoplasm. The protein resides in the secreted. It localises to the cell surface. It catalyses the reaction (2R)-2-phosphoglycerate = phosphoenolpyruvate + H2O. The protein operates within carbohydrate degradation; glycolysis; pyruvate from D-glyceraldehyde 3-phosphate: step 4/5. Functionally, catalyzes the reversible conversion of 2-phosphoglycerate (2-PG) into phosphoenolpyruvate (PEP). It is essential for the degradation of carbohydrates via glycolysis. The polypeptide is Enolase (Solidesulfovibrio magneticus (strain ATCC 700980 / DSM 13731 / RS-1) (Desulfovibrio magneticus)).